Consider the following 498-residue polypeptide: ATP synthase subunit beta, chloroplastic (498 aa).

Residue Thr6 is modified to Phosphothreonine. At Ser13 the chain carries Phosphoserine. 172 to 179 (GGAGVGKT) provides a ligand contact to ATP.

This sequence belongs to the ATPase alpha/beta chains family. As to quaternary structure, F-type ATPases have 2 components, CF(1) - the catalytic core - and CF(0) - the membrane proton channel. CF(1) has five subunits: alpha(3), beta(3), gamma(1), delta(1), epsilon(1). CF(0) has four main subunits: a(1), b(1), b'(1) and c(9-12).

The protein localises to the plastid. The protein resides in the chloroplast thylakoid membrane. The catalysed reaction is ATP + H2O + 4 H(+)(in) = ADP + phosphate + 5 H(+)(out). Functionally, produces ATP from ADP in the presence of a proton gradient across the membrane. The catalytic sites are hosted primarily by the beta subunits. This Nasturtium officinale (Watercress) protein is ATP synthase subunit beta, chloroplastic.